A 160-amino-acid polypeptide reads, in one-letter code: Cyanate hydratase (160 aa).

Residues Arg100, Glu103, and Ser126 contribute to the active site.

The protein belongs to the cyanase family.

It carries out the reaction cyanate + hydrogencarbonate + 3 H(+) = NH4(+) + 2 CO2. Functionally, catalyzes the reaction of cyanate with bicarbonate to produce ammonia and carbon dioxide. In Emericella nidulans (strain FGSC A4 / ATCC 38163 / CBS 112.46 / NRRL 194 / M139) (Aspergillus nidulans), this protein is Cyanate hydratase.